Here is a 284-residue protein sequence, read N- to C-terminus: ATP synthase subunit a (284 aa).

5 helical membrane-spanning segments follow: residues 47–67, 108–128, 156–176, 233–253, and 254–274; these read AFHL…LIFF, VAPL…MDLV, VPTA…ILII, MIFI…SLPW, and AIFH…LVIV.

It belongs to the ATPase A chain family. In terms of assembly, F-type ATPases have 2 components, CF(1) - the catalytic core - and CF(0) - the membrane proton channel. CF(1) has five subunits: alpha(3), beta(3), gamma(1), delta(1), epsilon(1). CF(0) has three main subunits: a(1), b(2) and c(9-12). The alpha and beta chains form an alternating ring which encloses part of the gamma chain. CF(1) is attached to CF(0) by a central stalk formed by the gamma and epsilon chains, while a peripheral stalk is formed by the delta and b chains.

It localises to the cell inner membrane. Key component of the proton channel; it plays a direct role in the translocation of protons across the membrane. This chain is ATP synthase subunit a, found in Ruthia magnifica subsp. Calyptogena magnifica.